Reading from the N-terminus, the 3164-residue chain is Protein eyes shut homolog (3164 aa).

An N-terminal signal peptide occupies residues 1–21; the sequence is MTDKSIIILSLMVFHSSFING. Asn42, Asn105, Asn117, and Asn166 each carry an N-linked (GlcNAc...) asparagine glycan. 3 EGF-like domains span residues 170–212, 213–254, and 256–292; these read KQQF…KYCQ, ELDA…KNCS, and IIGQ…PFCE. 9 disulfide bridges follow: Cys174–Cys189, Cys183–Cys200, Cys202–Cys211, Cys217–Cys228, Cys222–Cys242, Cys244–Cys253, Cys260–Cys270, Cys265–Cys280, and Cys282–Cys291. Asn225, Asn252, Asn269, and Asn272 each carry an N-linked (GlcNAc...) asparagine glycan. Residues Asn311 and Asn343 are each glycosylated (N-linked (GlcNAc...) asparagine). 2 EGF-like domains span residues 332–368 and 370–406; these read DVSE…LLCK and IQTS…KNCE. 5 cysteine pairs are disulfide-bonded: Cys336–Cys347, Cys341–Cys356, Cys358–Cys367, Cys374–Cys385, and Cys396–Cys405. Asn382 is a glycosylation site (N-linked (GlcNAc...) asparagine). N-linked (GlcNAc...) asparagine glycans are attached at residues Asn506, Asn521, and Asn566. One can recognise an EGF-like 6 domain in the interval 567-602; that stretch reads TTDDQENECQHEAICKDEINRPRCSCSLSYIGRLCV. 2 disulfide bridges follow: Cys575-Cys590 and Cys592-Cys601. Residues Asn611 and Asn654 are each glycosylated (N-linked (GlcNAc...) asparagine). Residues 643-679 enclose the EGF-like 7 domain; the sequence is DTEDCKSVSCKNGTTSIHLRGYFFCKCVPGFKGTQRE. Cystine bridges form between Cys652/Cys667, Cys685/Cys696, Cys690/Cys705, Cys707/Cys719, Cys737/Cys748, and Cys742/Cys757. The region spanning 681–720 is the EGF-like 8; calcium-binding domain; that stretch reads DIDECASHPCKNGATCIDQPGNYFCQCVPPFKVVDGFSCL. In terms of domain architecture, EGF-like 9; calcium-binding spans 733–769; sequence DIDDCILNACEHNSTCKDLHLSYQCVCLSGWEGNFSE. Asn745, Asn766, Asn782, Asn783, and Asn805 each carry an N-linked (GlcNAc...) asparagine glycan. The EGF-like 10; calcium-binding domain maps to 771 to 807; it reads ESNECKMNPCKNNSTCIDLYKSYRCECTSGWTGQNCS. 33 disulfides stabilise this stretch: Cys775-Cys786, Cys780-Cys795, Cys797-Cys806, Cys813-Cys824, Cys818-Cys835, Cys837-Cys846, Cys853-Cys866, Cys860-Cys876, Cys878-Cys887, Cys894-Cys905, Cys899-Cys914, Cys916-Cys925, Cys932-Cys943, Cys937-Cys952, Cys954-Cys963, Cys970-Cys981, Cys975-Cys990, Cys992-Cys1001, Cys1008-Cys1019, Cys1013-Cys1028, Cys1030-Cys1039, Cys1046-Cys1056, Cys1051-Cys1065, Cys1067-Cys1076, Cys1083-Cys1094, Cys1088-Cys1103, Cys1105-Cys1114, Cys1121-Cys1137, Cys1131-Cys1147, Cys1149-Cys1158, Cys1165-Cys1176, Cys1170-Cys1185, and Cys1187-Cys1196. 3 EGF-like domains span residues 809–847, 849–888, and 890–926; these read EINE…RFCH, RYNP…KNCE, and DVKE…SLCE. Residues Asn862 and Asn863 are each glycosylated (N-linked (GlcNAc...) asparagine). The EGF-like 14; calcium-binding domain occupies 928–964; it reads EINECSSEPCKNNGTCVDLTNRFFCNCEPGYHGPFCE. Asn940 carries an N-linked (GlcNAc...) asparagine glycan. An EGF-like 15 domain is found at 966 to 1002; sequence DVNKCKISPCLDEENCVYRTDGYNCLCAPGYTGINCE. The region spanning 1004–1040 is the EGF-like 16; calcium-binding domain; the sequence is NLDECLSEPCLHDGVCIDGINHYTCDCKSGFFGTHCE. 3 consecutive EGF-like domains span residues 1042–1077, 1079–1115, and 1117–1159; these read NAND…TQCK, KIND…AYCE, and SIDN…QFCE. An EGF-like 20; calcium-binding domain is found at 1161–1197; that stretch reads NINECSSSPCLHGADCEDHINGYVCKCQPGWSGHHCE. Residues Asn1509, Asn1522, Asn1906, Asn1941, Asn1960, and Asn2033 are each glycosylated (N-linked (GlcNAc...) asparagine). A Laminin G-like 1 domain is found at 1883–2063; it reads FSCVRYYGDS…AVKNYHINNC (181 aa). Intrachain disulfides connect Cys2037-Cys2063, Cys2103-Cys2114, Cys2108-Cys2128, and Cys2130-Cys2139. Positions 2099-2140 constitute an EGF-like 21 domain; the sequence is APSVCQQDVCHNGGTCHPIFLSRGIVSFQCDCPLHFTGRFCE. In terms of domain architecture, Laminin G-like 2 spans 2145-2339; it reads LFFPSFNGNS…NIENCHVPWC (195 aa). 3 N-linked (GlcNAc...) asparagine glycosylation sites follow: Asn2170, Asn2185, and Asn2228. 6 cysteine pairs are disulfide-bonded: Cys2308-Cys2339, Cys2339-Cys2350, Cys2344-Cys2359, Cys2375-Cys2386, Cys2380-Cys2396, and Cys2398-Cys2407. EGF-like domains are found at residues 2335–2368 and 2371–2408; these read HVPW…YSGK and QFAS…PLCT. Asn2347 carries N-linked (GlcNAc...) asparagine glycosylation. N-linked (GlcNAc...) asparagine glycans are attached at residues Asn2412, Asn2453, Asn2484, Asn2506, and Asn2532. Residues 2419 to 2609 enclose the Laminin G-like 3 domain; sequence SGTDAFGYTS…PNAGRSVGQC (191 aa). Disulfide bonds link Cys2576/Cys2609, Cys2614/Cys2625, and Cys2619/Cys2634. 2 consecutive EGF-like domains span residues 2610–2646 and 2648–2689; these read HASP…AFCT and TVST…IYCE. Asn2635 carries N-linked (GlcNAc...) asparagine glycosylation. 4 disulfides stabilise this stretch: Cys2636–Cys2645, Cys2652–Cys2668, Cys2662–Cys2677, and Cys2679–Cys2688. Residues 2717–2895 form the Laminin G-like 4 domain; that stretch reads DPSFRSNELS…AKGGSNVGDC (179 aa). 3 N-linked (GlcNAc...) asparagine glycosylation sites follow: Asn2775, Asn2800, and Asn2824. Intrachain disulfides connect Cys2868–Cys2895, Cys2900–Cys2911, Cys2905–Cys2920, and Cys2922–Cys2931. EGF-like domains lie at 2896–2932 and 2933–2970; these read DGTA…NTCN and QSVY…RYCE. N-linked (GlcNAc...) asparagine glycosylation is present at Asn2914. A glycan (N-linked (GlcNAc...) asparagine) is linked at Asn2932. 3 disulfide bridges follow: Cys2937-Cys2948, Cys2942-Cys2958, and Cys2960-Cys2969. N-linked (GlcNAc...) asparagine glycosylation occurs at Asn2951. Asn2971, Asn3006, Asn3036, Asn3057, Asn3073, and Asn3082 each carry an N-linked (GlcNAc...) asparagine glycan. The region spanning 2975–3164 is the Laminin G-like 5 domain; that stretch reads FSTAKFMGNS…YDGDEQNEVT (190 aa).

Belongs to the EYS family.

The protein localises to the cell projection. Its subcellular location is the cilium. It is found in the photoreceptor outer segment. It localises to the cytoplasm. The protein resides in the cytoskeleton. The protein localises to the cilium axoneme. Its subcellular location is the microtubule organizing center. It is found in the centrosome. It localises to the secreted. The protein resides in the extracellular space. The protein localises to the extracellular matrix. Its subcellular location is the interphotoreceptor matrix. Required to maintain the integrity of photoreceptor cells. Specifically required for normal morphology of the photoreceptor ciliary pocket, and might thus facilitate protein trafficking between the photoreceptor inner and outer segments via the transition zone. The chain is Protein eyes shut homolog (EYS) from Pongo abelii (Sumatran orangutan).